We begin with the raw amino-acid sequence, 346 residues long: Nicotinate-nucleotide--dimethylbenzimidazole phosphoribosyltransferase (346 aa).

The active-site Proton acceptor is Glu312.

The protein belongs to the CobT family.

The enzyme catalyses 5,6-dimethylbenzimidazole + nicotinate beta-D-ribonucleotide = alpha-ribazole 5'-phosphate + nicotinate + H(+). The protein operates within nucleoside biosynthesis; alpha-ribazole biosynthesis; alpha-ribazole from 5,6-dimethylbenzimidazole: step 1/2. Its function is as follows. Catalyzes the synthesis of alpha-ribazole-5'-phosphate from nicotinate mononucleotide (NAMN) and 5,6-dimethylbenzimidazole (DMB). The polypeptide is Nicotinate-nucleotide--dimethylbenzimidazole phosphoribosyltransferase (Cupriavidus necator (strain ATCC 17699 / DSM 428 / KCTC 22496 / NCIMB 10442 / H16 / Stanier 337) (Ralstonia eutropha)).